Here is a 487-residue protein sequence, read N- to C-terminus: Protein nucleotidyltransferase YdiU (487 aa).

Residues glycine 90, glycine 92, arginine 93, lysine 113, aspartate 125, glycine 126, arginine 176, and arginine 183 each coordinate ATP. Aspartate 252 functions as the Proton acceptor in the catalytic mechanism. Asparagine 253 and aspartate 262 together coordinate Mg(2+). Aspartate 262 lines the ATP pocket.

The protein belongs to the SELO family. It depends on Mg(2+) as a cofactor. Mn(2+) serves as cofactor.

The catalysed reaction is L-seryl-[protein] + ATP = 3-O-(5'-adenylyl)-L-seryl-[protein] + diphosphate. The enzyme catalyses L-threonyl-[protein] + ATP = 3-O-(5'-adenylyl)-L-threonyl-[protein] + diphosphate. It catalyses the reaction L-tyrosyl-[protein] + ATP = O-(5'-adenylyl)-L-tyrosyl-[protein] + diphosphate. It carries out the reaction L-histidyl-[protein] + UTP = N(tele)-(5'-uridylyl)-L-histidyl-[protein] + diphosphate. The catalysed reaction is L-seryl-[protein] + UTP = O-(5'-uridylyl)-L-seryl-[protein] + diphosphate. The enzyme catalyses L-tyrosyl-[protein] + UTP = O-(5'-uridylyl)-L-tyrosyl-[protein] + diphosphate. Nucleotidyltransferase involved in the post-translational modification of proteins. It can catalyze the addition of adenosine monophosphate (AMP) or uridine monophosphate (UMP) to a protein, resulting in modifications known as AMPylation and UMPylation. This chain is Protein nucleotidyltransferase YdiU, found in Pseudomonas fluorescens (strain Pf0-1).